The chain runs to 255 residues: tRNA (guanine-N(1)-)-methyltransferase (255 aa).

S-adenosyl-L-methionine-binding positions include glycine 113 and 133-138 (IGDYVL).

Belongs to the RNA methyltransferase TrmD family. Homodimer.

Its subcellular location is the cytoplasm. The enzyme catalyses guanosine(37) in tRNA + S-adenosyl-L-methionine = N(1)-methylguanosine(37) in tRNA + S-adenosyl-L-homocysteine + H(+). Its function is as follows. Specifically methylates guanosine-37 in various tRNAs. This is tRNA (guanine-N(1)-)-methyltransferase from Salmonella choleraesuis (strain SC-B67).